The sequence spans 341 residues: Adenosine deaminase (341 aa).

The Zn(2+) site is built by H15 and H17. Substrate is bound by residues H17, D19, and G172. H199 contributes to the Zn(2+) binding site. E202 functions as the Proton donor in the catalytic mechanism. Residue D279 coordinates Zn(2+).

This sequence belongs to the metallo-dependent hydrolases superfamily. Adenosine and AMP deaminases family. Adenosine deaminase subfamily. Zn(2+) serves as cofactor.

It carries out the reaction adenosine + H2O + H(+) = inosine + NH4(+). The catalysed reaction is 2'-deoxyadenosine + H2O + H(+) = 2'-deoxyinosine + NH4(+). Its function is as follows. Catalyzes the hydrolytic deamination of adenosine and 2-deoxyadenosine. This chain is Adenosine deaminase, found in Streptococcus equi subsp. zooepidemicus (strain MGCS10565).